The chain runs to 197 residues: Phospholipid hydroperoxide glutathione peroxidase (197 aa).

Ser-40 is modified (phosphoserine). The active site involves Sec-73. Position 73 (Sec-73) is a non-standard amino acid, selenocysteine.

This sequence belongs to the glutathione peroxidase family. Monomer. Has a tendency to form higher mass oligomers. Interacts with FUNDC1; this interaction promotes GPX4 recruitment into mitochondria through TOM/TIM complex where it is degraded by mitophagy. As to expression, expressed very intensively in the testis and weakly in lung, heart, and cerebellum.

It localises to the mitochondrion. The protein resides in the cytoplasm. The catalysed reaction is a hydroperoxy polyunsaturated fatty acid + 2 glutathione = a hydroxy polyunsaturated fatty acid + glutathione disulfide + H2O. It catalyses the reaction 2 glutathione + H2O2 = glutathione disulfide + 2 H2O. It carries out the reaction tert-butyl hydroperoxide + 2 glutathione = tert-butanol + glutathione disulfide + H2O. The enzyme catalyses cumene hydroperoxide + 2 glutathione = 2-phenylpropan-2-ol + glutathione disulfide + H2O. The catalysed reaction is (9S)-hydroperoxy-(10E,12Z)-octadecadienoate + 2 glutathione = (9S)-hydroxy-(10E,12Z)-octadecadienoate + glutathione disulfide + H2O. It catalyses the reaction (13S)-hydroperoxy-(9Z,11E)-octadecadienoate + 2 glutathione = (13S)-hydroxy-(9Z,11E)-octadecadienoate + glutathione disulfide + H2O. It carries out the reaction (5S)-hydroperoxy-(6E,8Z,11Z,14Z)-eicosatetraenoate + 2 glutathione = (5S)-hydroxy-(6E,8Z,11Z,14Z)-eicosatetraenoate + glutathione disulfide + H2O. The enzyme catalyses (12R)-hydroperoxy-(5Z,8Z,10E,14Z)-eicosatetraenoate + 2 glutathione = (12R)-hydroxy-(5Z,8Z,10E,14Z)-eicosatetraenoate + glutathione disulfide + H2O. The catalysed reaction is (12S)-hydroperoxy-(5Z,8Z,10E,14Z)-eicosatetraenoate + 2 glutathione = (12S)-hydroxy-(5Z,8Z,10E,14Z)-eicosatetraenoate + glutathione disulfide + H2O. It catalyses the reaction (15S)-hydroperoxy-(5Z,8Z,11Z,13E)-eicosatetraenoate + 2 glutathione = (15S)-hydroxy-(5Z,8Z,11Z,13E)-eicosatetraenoate + glutathione disulfide + H2O. It carries out the reaction (5S)-hydroperoxy-(6E,8Z,11Z,14Z,17Z)-eicosapentaenoate + 2 glutathione = (5S)-hydroxy-(6E,8Z,11Z,14Z,17Z)-eicosapentaenoate + glutathione disulfide + H2O. The enzyme catalyses (12S)-hydroperoxy-(5Z,8Z,10E,14Z,17Z)-eicosapentaenoate + 2 glutathione = (12S)-hydroxy-(5Z,8Z,10E,14Z,17Z)-eicosapentaenoate + glutathione disulfide + H2O. The catalysed reaction is (15S)-hydroperoxy-(5Z,8Z,11Z,13E,17Z)-eicosapentaenoate + 2 glutathione = (15S)-hydroxy-(5Z,8Z,11Z,13E,17Z)-eicosapentaenoate + glutathione disulfide + H2O. It catalyses the reaction (15S)-hydroperoxy-(11Z,13E)-eicosadienoate + 2 glutathione = (15S)-hydroxy-(11Z,13E)-eicosadienoate + glutathione disulfide + H2O. It carries out the reaction (17S)-hydroperoxy-(4Z,7Z,10Z,13Z,15E,19Z)-docosahexaenoate + 2 glutathione = (17S)-hydroxy-(4Z,7Z,10Z,13Z,15E,19Z)-docosahexaenoate + glutathione disulfide + H2O. The enzyme catalyses a hydroperoxy-1,2-diacyl-glycero-3-phosphocholine + 2 glutathione = a hydroxy-1,2-diacyl-glycero-3-phosphocholine + glutathione disulfide + H2O. Essential antioxidant peroxidase that directly reduces phospholipid hydroperoxide even if they are incorporated in membranes and lipoproteins. Can also reduce fatty acid hydroperoxide, cholesterol hydroperoxide and thymine hydroperoxide. Plays a key role in protecting cells from oxidative damage by preventing membrane lipid peroxidation. Required to prevent cells from ferroptosis, a non-apoptotic cell death resulting from an iron-dependent accumulation of lipid reactive oxygen species. The presence of selenocysteine (Sec) versus Cys at the active site is essential for life: it provides resistance to overoxidation and prevents cells against ferroptosis. The presence of Sec at the active site is also essential for the survival of a specific type of parvalbumin-positive interneurons, thereby preventing against fatal epileptic seizures. May be required to protect cells from the toxicity of ingested lipid hydroperoxides. Required for normal sperm development and male fertility. Essential for maturation and survival of photoreceptor cells. Plays a role in a primary T-cell response to viral and parasitic infection by protecting T-cells from ferroptosis and by supporting T-cell expansion. Plays a role of glutathione peroxidase in platelets in the arachidonic acid metabolism. Reduces hydroperoxy ester lipids formed by a 15-lipoxygenase that may play a role as down-regulator of the cellular 15-lipoxygenase pathway. Can also reduce small soluble hydroperoxides such as H2O2, cumene hydroperoxide and tert-butyl hydroperoxide. This chain is Phospholipid hydroperoxide glutathione peroxidase, found in Macaca fuscata fuscata (Japanese macaque).